Reading from the N-terminus, the 95-residue chain is Protein translocase subunit SecE (95 aa).

A disordered region spans residues 1–35 (MTDAVGSIDMPDAEDEAPESKKKSRKGGKRGKKGP). Basic residues predominate over residues 22–35 (KKSRKGGKRGKKGP). Residues 67-87 (VVIVFVVVMIGLVTVLDIGFA) form a helical membrane-spanning segment.

The protein belongs to the SecE/SEC61-gamma family. Component of the Sec protein translocase complex. Heterotrimer consisting of SecY, SecE and SecG subunits. The heterotrimers can form oligomers, although 1 heterotrimer is thought to be able to translocate proteins. Interacts with the ribosome. Interacts with SecDF, and other proteins may be involved. Interacts with SecA.

It localises to the cell membrane. Its function is as follows. Essential subunit of the Sec protein translocation channel SecYEG. Clamps together the 2 halves of SecY. May contact the channel plug during translocation. This chain is Protein translocase subunit SecE, found in Streptomyces griseus.